Consider the following 811-residue polypeptide: Auxin response factor 8 (811 aa).

Positions 126-228 (FCKTLTASDT…QLFLGIRHAT (103 aa)) form a DNA-binding region, TF-B3. Disordered regions lie at residues 467 to 496 (HQYLQQSASHNSDLMLQQQQQQQASRHLMH) and 544 to 565 (HLQQWQQQSEMPSPSFMKSDFT). Polar residues-rich tracts occupy residues 469-482 (YLQQSASHNSDLML) and 544-555 (HLQQWQQQSEMP). Positions 705–789 (KNFVKVYKSG…WYIKILSPED (85 aa)) constitute a PB1 domain.

Belongs to the ARF family. Homodimers and heterodimers. In terms of tissue distribution, expressed in the whole plant.

The protein localises to the nucleus. Auxin response factors (ARFs) are transcriptional factors that bind specifically to the DNA sequence 5'-TGTCTC-3' found in the auxin-responsive promoter elements (AuxREs). Seems to act as transcriptional activator. Formation of heterodimers with Aux/IAA proteins may alter their ability to modulate early auxin response genes expression. Regulates both stamen and gynoecium maturation. Promotes jasmonic acid production. Partially redundant with ARF6. Involved in fruit initiation. Acts as an inhibitor to stop further carpel development in the absence of fertilization and the generation of signals required to initiate fruit and seed development. The sequence is that of Auxin response factor 8 (ARF8) from Arabidopsis thaliana (Mouse-ear cress).